Consider the following 469-residue polypeptide: UDP-N-acetylmuramate--L-alanine ligase (469 aa).

113 to 119 (GTHGKTT) contacts ATP.

This sequence belongs to the MurCDEF family.

It localises to the cytoplasm. The catalysed reaction is UDP-N-acetyl-alpha-D-muramate + L-alanine + ATP = UDP-N-acetyl-alpha-D-muramoyl-L-alanine + ADP + phosphate + H(+). It participates in cell wall biogenesis; peptidoglycan biosynthesis. Cell wall formation. This chain is UDP-N-acetylmuramate--L-alanine ligase, found in Neisseria gonorrhoeae (strain ATCC 700825 / FA 1090).